The following is a 248-amino-acid chain: MRTPLLPLARSVLLLLVLGSGHYAAALELNDPSSGKGESLSGDHSAGGLELSVGREVSTISEMPSGSELSTGDYDYSEEYDNEPQISGYIIDDSVRVEQVIKPKKNKTEGEKSTEKPKRKKKGGKNGKGRRNKKKKNPCTAKFQNFCIHGECRYIENLEVVTCNCHQDYFGERCGEKSMKTHSEDDKDLSKIAVVAVTIFVSAIILAAIGIGIVITVHLWKRYFREYEGETEERRRLRQENGTVHAIA.

A signal peptide spans methionine 1–alanine 26. A propeptide spanning residues leucine 27–glutamine 99 is cleaved from the precursor. Disordered stretches follow at residues leucine 29–glycine 48, valine 57–serine 77, and valine 100–lysine 136. The span at serine 58–serine 70 shows a compositional bias: polar residues. Basic and acidic residues predominate over residues valine 100–lysine 116. Asparagine 106 is a glycosylation site (N-linked (GlcNAc...) asparagine). Basic residues predominate over residues proline 117–lysine 136. One can recognise an EGF-like domain in the interval lysine 135 to glycine 175. Disulfide bonds link cysteine 139-cysteine 152, cysteine 147-cysteine 163, and cysteine 165-cysteine 174. The chain crosses the membrane as a helical span at residues isoleucine 192–isoleucine 215. Asparagine 241 carries N-linked (GlcNAc...) asparagine glycosylation.

Belongs to the amphiregulin family. As to quaternary structure, the immature precursor interacts with CNIH.

It is found in the membrane. Functionally, ligand of the EGF receptor/EGFR. Autocrine growth factor as well as a mitogen for a broad range of target cells including astrocytes, Schwann cells and fibroblasts. The protein is Amphiregulin (Areg) of Mus musculus (Mouse).